The following is a 112-amino-acid chain: Ig kappa chain V-III region PC 7132 (112 aa).

Residues 1-23 (DIVLTQSPASLAVSLGQRATISC) are framework-1. Cys23 and Cys92 form a disulfide bridge. Residues 24-38 (RASESVDNYGISFMN) are complementarity-determining-1. Residues 39 to 53 (WFQQKPGQPPKLLIY) are framework-2. A complementarity-determining-2 region spans residues 54–60 (AASNQGS). The framework-3 stretch occupies residues 61–92 (GVPARFSGSGSGTDFSLNIHPMEEDDTAMYFC). A complementarity-determining-3 region spans residues 93-102 (QQSKEVPPYT). The interval 103–112 (FGGGTKLEIK) is framework-4.

This is Ig kappa chain V-III region PC 7132 from Mus musculus (Mouse).